Here is a 405-residue protein sequence, read N- to C-terminus: Tryptophan synthase beta chain (405 aa).

At K98 the chain carries N6-(pyridoxal phosphate)lysine.

It belongs to the TrpB family. As to quaternary structure, tetramer of two alpha and two beta chains. The cofactor is pyridoxal 5'-phosphate.

It catalyses the reaction (1S,2R)-1-C-(indol-3-yl)glycerol 3-phosphate + L-serine = D-glyceraldehyde 3-phosphate + L-tryptophan + H2O. Its pathway is amino-acid biosynthesis; L-tryptophan biosynthesis; L-tryptophan from chorismate: step 5/5. The beta subunit is responsible for the synthesis of L-tryptophan from indole and L-serine. This Afipia carboxidovorans (strain ATCC 49405 / DSM 1227 / KCTC 32145 / OM5) (Oligotropha carboxidovorans) protein is Tryptophan synthase beta chain.